A 137-amino-acid polypeptide reads, in one-letter code: Putative mucosal pentraxin homolog (137 aa).

In terms of domain architecture, Pentraxin (PTX) spans 1 to 137; sequence MGMYLLHIGN…YVVTKPKVWA (137 aa). Residues Glu73, Asp75, and Gln85 each coordinate Ca(2+).

This sequence belongs to the pentraxin family. Not expressed in the intestinal tract including ascending colon, descending colon and rectum. Not expressed in the human colon cancer cell lines HT-29 and CaCo-2.

This chain is Putative mucosal pentraxin homolog (MPTX1), found in Homo sapiens (Human).